A 1100-amino-acid chain; its full sequence is Exportin-T (1100 aa).

Belongs to the exportin family. In terms of assembly, interacts with GSP1, GSP2, NSP1, NUP2 and UTP8.

Its subcellular location is the nucleus. The protein resides in the cytoplasm. In terms of biological role, tRNA nucleus export receptor which facilitates tRNA translocation across the nuclear pore complex. Preferentially interacts with tRNAs with mature 5'- and 3'-termini and does not distinguish between intron-containing and spliced tRNAs. In the nucleus binds to tRNA and to the Ran-GTPases GSP1 or GSP2 in their active GTP-bound form. Docking of this trimeric complex to the nuclear pore complex (NPC) is mediated through binding to nucleoporins. Upon transit of a nuclear export complex into the cytoplasm, disassembling of the complex and hydrolysis of Ran-GTP to Ran-GDP cause release of the tRNA from the export receptor. The directionality of nuclear export is thought to be conferred by an asymmetric distribution of the GTP- and GDP-bound forms of Ran between the cytoplasm and nucleus. Involved in pre-tRNA splicing, probably by affecting the interaction of pre-tRNA with splicing endonuclease. This chain is Exportin-T (LOS1), found in Saccharomyces cerevisiae (strain YJM789) (Baker's yeast).